Consider the following 878-residue polypeptide: E3 ubiquitin-protein ligase BRE1-like 1 (878 aa).

The tract at residues 1–21 is disordered; the sequence is MASTGEPDRKRRHFSSISPSE. Coiled coils occupy residues 48–76, 200–261, 293–382, and 537–624; these read QNLK…IKEK, QLAL…ELQQ, SDRE…EKLQ, and LDMY…ILKS. The RING-type zinc-finger motif lies at 826 to 865; that stretch reads CKACNDRPKEVVITKCYHLFCNPCVQKLTGTRQKKCPTCS.

Belongs to the BRE1 family. May act as a tetramer consisting of two copies of HUB1 and two copies of HUB2. Interacts with MED21. Ubiquitously expressed.

Its subcellular location is the nucleus. The enzyme catalyses S-ubiquitinyl-[E2 ubiquitin-conjugating enzyme]-L-cysteine + [acceptor protein]-L-lysine = [E2 ubiquitin-conjugating enzyme]-L-cysteine + N(6)-ubiquitinyl-[acceptor protein]-L-lysine.. It functions in the pathway protein modification; protein ubiquitination. Functionally, E3 ubiquitin-protein ligase that monoubiquitinates H2B to form H2BK143ub1. H2BK143ub1 gives a specific tag for epigenetic transcriptional activation and is also prerequisite for H3K4me and maybe H3K79me. It thereby plays a central role in histone code and gene regulation. Forms a ubiquitin ligase complex in cooperation with the E2 enzyme UBC2/RAD6. Required for the regulation of flowering time and defense against necrotrophic fungal pathogens. Involved in the control of seed dormancy and germination. This is E3 ubiquitin-protein ligase BRE1-like 1 (HUB1) from Arabidopsis thaliana (Mouse-ear cress).